The primary structure comprises 301 residues: Methionyl-tRNA formyltransferase (301 aa).

A (6S)-5,6,7,8-tetrahydrofolate-binding site is contributed by 109 to 112 (SILP).

This sequence belongs to the Fmt family.

The enzyme catalyses L-methionyl-tRNA(fMet) + (6R)-10-formyltetrahydrofolate = N-formyl-L-methionyl-tRNA(fMet) + (6S)-5,6,7,8-tetrahydrofolate + H(+). Attaches a formyl group to the free amino group of methionyl-tRNA(fMet). The formyl group appears to play a dual role in the initiator identity of N-formylmethionyl-tRNA by promoting its recognition by IF2 and preventing the misappropriation of this tRNA by the elongation apparatus. The polypeptide is Methionyl-tRNA formyltransferase (Campylobacter curvus (strain 525.92)).